A 407-amino-acid chain; its full sequence is CCCH-type zinc finger protein oma-1 (407 aa).

The segment at 1–39 is disordered; it reads MNVNGENNEKIDEHHLESSLAGVPTLPVSPLDHAKDLSQ. The segment covering 7 to 17 has biased composition (basic and acidic residues); that stretch reads NNEKIDEHHLE. The required for taf-4 binding stretch occupies residues 46–80; the sequence is IGDLVTQTANLIAIKKQLLEDIAFNQHIQSMQVRA. 2 C3H1-type zinc fingers span residues 112 to 140 and 154 to 182; these read SYKT…HGEE and KYKT…HPDH. Thr239 is modified (phosphothreonine; by mbk-2 and GSK3). Ser302 is modified (phosphoserine; by mbk-2). A Phosphothreonine; by GSK3 modification is found at Thr339.

Interacts with taf-4 (via C-terminus). Interacts with ifet-1. Component of a ribonucleoprotein particle complex that interacts with cgh-1 and car-1 in an RNA-dependent manner. Association with many proteins is dependent on the presence of RNA. Phosphorylation by mbk-2 and by gsk-3 are required for its rapid degradation following meiosis II. In terms of tissue distribution, exclusively expressed in the hermaphrodite gonad. Expressed prior to oocyte division. Widely distributed throughout gonadal oocytes from the mitotic stage to the developing diakinesis stage. Expressed in sperm.

Its subcellular location is the cytoplasm. It localises to the cytoplasmic granule. It is found in the nucleus. Functionally, zinc-finger RNA-binding protein that binds to 5'-UA[AU]-3' motifs in the 3'-UTR of maternal mRNAs to suppress translation in oocytes and embryos. Acts as a ribonucleoprotein particle component that may exert part of its function within cytoplasmic foci of unfertilized oocytes. Acts redundantly with oma-2 to control the temporal expression and distribution of maternal proteins and thereby promote meiotic progression, oocyte maturation, fertilization and embryonic development. Recruits the translational repressor ifet-1 to the 3'-UTR of mei-1 and zif-1 to negatively regulate their translation. By suppressing the translation of the E3 ligase zif-1, may in turn play a role in the stabilization of zif-1 targets such as the maternal transcriptional repressor protein pie-1. Following fertilization, sequesters the transcription initiation factor, taf-4, in the cytoplasm, which prevents its nuclear localization and thus allows for transcriptional suppression in early embryos, but not in oocytes. Also, together with oma-2, is involved in P-granule distribution during embryonic development. This is CCCH-type zinc finger protein oma-1 from Caenorhabditis elegans.